We begin with the raw amino-acid sequence, 222 residues long: Myosin regulatory light chain 2 (222 aa).

Residues methionine 1–glycine 65 are disordered. Alanine 2 bears the N-acetylalanine mark. A compositionally biased stretch (low complexity) spans threonine 19 to glycine 53. Residues serine 66 and serine 67 each carry the phosphoserine modification. EF-hand domains lie at lysine 75–isoleucine 110, aspartate 147–lysine 180, and phenylalanine 181–glutamate 216. Residues aspartate 88, aspartate 90, aspartate 92, and aspartate 99 each contribute to the Ca(2+) site.

In terms of assembly, myosin is a hexamer of 2 heavy chains and 4 light chains.

In Drosophila melanogaster (Fruit fly), this protein is Myosin regulatory light chain 2 (Mlc2).